Here is a 354-residue protein sequence, read N- to C-terminus: UDP-3-O-acylglucosamine N-acyltransferase (354 aa).

Residue H258 is the Proton acceptor of the active site.

This sequence belongs to the transferase hexapeptide repeat family. LpxD subfamily. In terms of assembly, homotrimer.

The catalysed reaction is a UDP-3-O-[(3R)-3-hydroxyacyl]-alpha-D-glucosamine + a (3R)-hydroxyacyl-[ACP] = a UDP-2-N,3-O-bis[(3R)-3-hydroxyacyl]-alpha-D-glucosamine + holo-[ACP] + H(+). It functions in the pathway bacterial outer membrane biogenesis; LPS lipid A biosynthesis. Catalyzes the N-acylation of UDP-3-O-acylglucosamine using 3-hydroxyacyl-ACP as the acyl donor. Is involved in the biosynthesis of lipid A, a phosphorylated glycolipid that anchors the lipopolysaccharide to the outer membrane of the cell. The protein is UDP-3-O-acylglucosamine N-acyltransferase of Sinorhizobium fredii (strain NBRC 101917 / NGR234).